The chain runs to 248 residues: Cyclo(L-leucyl-L-leucyl) synthase (248 aa).

Serine 37 (nucleophile) is an active-site residue. Substrate contacts are provided by residues asparagine 40, 180-184 (YVIAE), tyrosine 204, and 209-210 (KL).

The protein belongs to the CDPS family. In terms of assembly, monomer.

It catalyses the reaction 2 L-leucyl-tRNA(Leu) = cyclo(L-leucyl-L-leucyl) + 2 tRNA(Leu) + 2 H(+). Involved in the biosynthesis of pulcherrimin, a red extracellular pigment. It uses activated amino acids in the form of aminoacyl-tRNAs (aa-tRNAs) as substrates to catalyze the ATP-independent formation of cyclodipeptides which are intermediates in diketopiperazine (DKP) biosynthetic pathways. Catalyzes the formation of cyclo(L-Leu-L-Leu) (cLL) from L-leucyl-tRNA(Leu). Can also incorporate various nonpolar residues, such as L-phenylalanine, L-leucine and methionine, into cyclodipeptides. The protein is Cyclo(L-leucyl-L-leucyl) synthase (yvmC) of Bacillus subtilis (strain 168).